Consider the following 418-residue polypeptide: Actin-related protein 3B (418 aa).

Belongs to the actin family. ARP3 subfamily. In terms of assembly, interacts with the Arp2/3 complex composed of ARP2, ARP3, ARPC1B, ARPC1B/p41-ARC, ARPC2/p34-ARC, ARPC3/p21-ARC, ARPC4/p20-ARC and ARPC5/p16-ARC.

The protein localises to the cytoplasm. It is found in the cytoskeleton. The protein resides in the cell projection. Functionally, plays a role in the organization of the actin cytoskeleton. May function as ATP-binding component of the Arp2/3 complex which is involved in regulation of actin polymerization and together with an activating nucleation-promoting factor (NPF) mediates the formation of branched actin networks. May decrease the metastatic potential of tumors. This is Actin-related protein 3B (Actr3b) from Mus musculus (Mouse).